The sequence spans 867 residues: Translation initiation factor IF-2 (867 aa).

In terms of domain architecture, tr-type G spans 367 to 534 (TRAPVVTIMG…AILLQSEILE (168 aa)). The tract at residues 376–383 (GHVDHGKT) is G1. 376–383 (GHVDHGKT) contributes to the GTP binding site. The tract at residues 401-405 (GITQN) is G2. The interval 422-425 (DTPG) is G3. GTP is bound by residues 422 to 426 (DTPGH) and 476 to 479 (NKID). Residues 476–479 (NKID) form a G4 region. Positions 512-514 (SAK) are G5.

It belongs to the TRAFAC class translation factor GTPase superfamily. Classic translation factor GTPase family. IF-2 subfamily.

Its subcellular location is the cytoplasm. Functionally, one of the essential components for the initiation of protein synthesis. Protects formylmethionyl-tRNA from spontaneous hydrolysis and promotes its binding to the 30S ribosomal subunits. Also involved in the hydrolysis of GTP during the formation of the 70S ribosomal complex. In Buchnera aphidicola subsp. Schizaphis graminum (strain Sg), this protein is Translation initiation factor IF-2.